A 407-amino-acid chain; its full sequence is Wilms tumor protein homolog B (407 aa).

Glycyl lysine isopeptide (Lys-Gly) (interchain with G-Cter in SUMO) cross-links involve residues Lys-55 and Lys-158. The short motif at 213–221 (MTWNQMNLG) is the 9aaTAD element. 4 C2H2-type zinc fingers span residues 284–308 (FMCA…SRKH), 314–338 (YQCD…QRRH), 344–366 (FQCK…TRTH), and 372–396 (FSCR…HNMH). Important for interaction with target DNA regions lie at residues 328–342 (SDQL…TGVK) and 354–362 (SRSDHLKTH).

Belongs to the EGR C2H2-type zinc-finger protein family. Expressed in the pronephric anlage from stage 23 to 30. Also expressed in the adult kidney (mesonephros) and in testis.

The protein localises to the nucleus. The protein resides in the cytoplasm. It localises to the nucleus speckle. Functionally, transcription factor required for development of the vascular component of the pronephric kidney, the glomus; may repress tubule-specific gene expression in the portion of the pronephros fated to form the glomus. Recognizes and binds to the DNA sequence 5'-GCG(T/G)GGGCG-3'. Inhibits Wnt-signaling during embryonic development. The chain is Wilms tumor protein homolog B (wt1-b) from Xenopus laevis (African clawed frog).